Consider the following 224-residue polypeptide: tRNA (guanine-N(7)-)-methyltransferase (224 aa).

S-adenosyl-L-methionine contacts are provided by glutamate 56, glutamate 81, aspartate 108, and aspartate 131. The active site involves aspartate 131. Residues lysine 135, aspartate 167, and 202-205 contribute to the substrate site; that span reads TKFE.

It belongs to the class I-like SAM-binding methyltransferase superfamily. TrmB family.

The enzyme catalyses guanosine(46) in tRNA + S-adenosyl-L-methionine = N(7)-methylguanosine(46) in tRNA + S-adenosyl-L-homocysteine. The protein operates within tRNA modification; N(7)-methylguanine-tRNA biosynthesis. In terms of biological role, catalyzes the formation of N(7)-methylguanine at position 46 (m7G46) in tRNA. The sequence is that of tRNA (guanine-N(7)-)-methyltransferase from Nitrosomonas eutropha (strain DSM 101675 / C91 / Nm57).